Consider the following 373-residue polypeptide: Transaldolase (373 aa).

The active-site Schiff-base intermediate with substrate is lysine 143.

It belongs to the transaldolase family. Type 2 subfamily.

Its subcellular location is the cytoplasm. The enzyme catalyses D-sedoheptulose 7-phosphate + D-glyceraldehyde 3-phosphate = D-erythrose 4-phosphate + beta-D-fructose 6-phosphate. The protein operates within carbohydrate degradation; pentose phosphate pathway; D-glyceraldehyde 3-phosphate and beta-D-fructose 6-phosphate from D-ribose 5-phosphate and D-xylulose 5-phosphate (non-oxidative stage): step 2/3. In terms of biological role, transaldolase is important for the balance of metabolites in the pentose-phosphate pathway. The polypeptide is Transaldolase (tal) (Mycobacterium tuberculosis (strain ATCC 25618 / H37Rv)).